A 181-amino-acid polypeptide reads, in one-letter code: MKLNVTIEIPKKSNVKYEYDRKTNQISVDRILFGTEVYPHNYGFIKEALDWDGDELDALVIADQSFLPGIIVPAKIIGAMEMIDDGETDTKLISVIDCDPRYKHINNLSDLGEHTLKEIQNFFETYKLLQNKKVVIKGFKDSAWATKEYNECVELMKKYGKMDKDEFVNKMKKEHPEKYKA.

The substrate site is built by Lys-16, Arg-30, and Tyr-42. Mg(2+) contacts are provided by Asp-52, Asp-57, and Asp-89. A substrate-binding site is contributed by Tyr-126.

The protein belongs to the PPase family. Homohexamer. It depends on Mg(2+) as a cofactor.

Its subcellular location is the cytoplasm. The enzyme catalyses diphosphate + H2O = 2 phosphate + H(+). In terms of biological role, catalyzes the hydrolysis of inorganic pyrophosphate (PPi) forming two phosphate ions. This chain is Inorganic pyrophosphatase, found in Malacoplasma penetrans (strain HF-2) (Mycoplasma penetrans).